The chain runs to 546 residues: MNVQRPGLAVGPLFENPESESSEPGSPAAAARWVEASTEAEASAASSSQGQIVAAPTAEERPWEGRPQEAVSRTRAWREAGDVDEPLDLSFLSLTPLSIPLVSGLRRLNVNNNQLGDLPDTLPGTLLELEASENRLTRLPDLPAGLQRLNVENNRLTNLPEPLPAALEWLGAGYNQLTRLPEMIPPELIWLGARNNQLTSVPESLLTQLGQWSSIDLENNPLPHGVQTNLVTAMHAAGYAGPQIFLPMGPVELARRPLHEVVADWLEGDLETVAAWRGFANEQGARDYAHFLDRLRTTVNYGNDAFRQAVAIGLRQAVARPQLRAQYFEQASGASDSCEDRITLTWNGMQTALLIADVEDGVYDGSLHQLLQHGRVMFRLEALDGIARETVNSLRRTDPDADIDEIEVYLAYQTQLRDTLELRHVAPDMRFLNVSHVTEEDVARAASSVRELEARGFGEYVATRWQPWERVMRRIAPASHAAMQEQLIEAMGEEFRSRLDEKLAEHGLTGDADAERVFGAEILNDIARRIKGETMEKVLRGRGLEL.

Positions 1–70 (MNVQRPGLAV…RPWEGRPQEA (70 aa)) are disordered. Residues 1 to 248 (MNVQRPGLAV…YAGPQIFLPM (248 aa)) form an interaction with target proteins region. Low complexity predominate over residues 22-48 (SEPGSPAAAARWVEASTEAEASAASSS). Positions 58-67 (AEERPWEGRP) are enriched in basic and acidic residues. LRR repeat units lie at residues 104–125 (GLRR…LPGT), 126–144 (LLEL…DLPA), 145–166 (GLQR…LPAA), 167–186 (LEWL…MIPP), and 187–208 (ELIW…LLTQ). The segment at 249–256 (GPVELARR) is linker. An NEL domain is found at 257 to 546 (PLHEVVADWL…KVLRGRGLEL (290 aa)). The interval 257 to 546 (PLHEVVADWL…KVLRGRGLEL (290 aa)) is E3 ubiquitin-protein ligase catalytic domain. Cys-338 (glycyl thioester intermediate) is an active-site residue.

It belongs to the LRR-containing bacterial E3 ligase family. In terms of processing, ubiquitinated in the presence of host E1 ubiquitin-activating enzyme, E2 ubiquitin-conjugating enzyme and ubiquitin.

The protein localises to the secreted. Its subcellular location is the host cytoplasm. In terms of biological role, effector proteins function to alter host cell physiology and promote bacterial survival in host tissues. This protein is an E3 ubiquitin ligase that interferes with host's ubiquitination pathway. The polypeptide is Probable E3 ubiquitin-protein ligase NGR_a03640 (Sinorhizobium fredii (strain NBRC 101917 / NGR234)).